We begin with the raw amino-acid sequence, 634 residues long: MSSCGACTCGAAAARLLTTSLTSAQRGISCGRIHVPVLGRLGTTLDAQALRRAPLRTFSETPAYFASKDGANKDGSGDGNKKSVTEGSSKKSGSGNSGKGGNQLRCPKCGDLCTHVETFVSSTRFVKCEKCHHFFVVLSEADSKKSIIKEPESAAEAVKLAFQQKPPPPPKKIYNYLDKYVVGQSFAKKVLSVAVYNHYKRIYNNIPANLRQQAEAEKQTSLTPRELEIRRREDEYRFTKLLQIAGISPHGNALGASMQQQVNQQMPQEKRGGEVLDSSQDDIKLEKSNILLLGPTGSGKTLLAQTLAKCLDVPFAICDCTTLTQAGYVGEDIESVIAKLLQDANYNVEKAQQGIVFLDEVDKIGSVPGIHQLRDVGGEGVQQGLLKLLEGTIVNVPEKNSRKLRGETVQVDTTNVLFVASGAFNGLDRIISRRKNEKYLGFGTPSNLGKGRRAAAAADLANRSGESNTHQDIEEKDRLLRHVEARDLIEFGMIPEFVGRLPVVVPLHSLDEKTLVQILTEPRNAVIPQYQALFSMDKCELNVTEDALKAIARLALERKTGARGLRSIMEKLLLEPMFEVPNSDIVCVEVDKEVVEGKKEPGYIRAPSKESSEEEYDSGVEEDGWPRQADAANS.

A mitochondrion-targeting transit peptide spans 1–56 (MSSCGACTCGAAAARLLTTSLTSAQRGISCGRIHVPVLGRLGTTLDAQALRRAPLR). Residues 69-102 (DGANKDGSGDGNKKSVTEGSSKKSGSGNSGKGGN) are disordered. The span at 70 to 84 (GANKDGSGDGNKKSV) shows a compositional bias: basic and acidic residues. Residues 85-94 (TEGSSKKSGS) are compositionally biased toward low complexity. In terms of domain architecture, ClpX-type ZB spans 94 to 147 (SGNSGKGGNQLRCPKCGDLCTHVETFVSSTRFVKCEKCHHFFVVLSEADSKKSI). The Zn(2+) site is built by Cys-106, Cys-109, Cys-128, and Cys-131. 295-302 (PTGSGKTL) provides a ligand contact to ATP. Lys-438 bears the N6-acetyllysine mark. Positions 599-611 (KEPGYIRAPSKES) are enriched in basic and acidic residues. The disordered stretch occupies residues 599 to 634 (KEPGYIRAPSKESSEEEYDSGVEEDGWPRQADAANS). The span at 612 to 623 (SEEEYDSGVEED) shows a compositional bias: acidic residues. The residue at position 618 (Ser-618) is a Phosphoserine.

It belongs to the ClpX chaperone family. In terms of assembly, homohexamer that forms a ring structure; this hexamerization requires ATP binding. Component of the ClpXP complex formed by the assembly of two CLPP heptameric rings with two CLPX hexameric rings, giving rise to a symmetrical structure with two central CLPP rings flanked by a CLPX ring at either end of the complex. Interacts with TFAM. In terms of tissue distribution, detected in liver (at protein level).

The protein localises to the mitochondrion. The protein resides in the mitochondrion matrix. Its subcellular location is the mitochondrion nucleoid. The enzyme catalyses ATP + H2O = ADP + phosphate + H(+). Its function is as follows. ATP-dependent chaperone that functions as an unfoldase. As part of the ClpXP protease complex, it recognizes specific protein substrates, unfolds them using energy derived from ATP hydrolysis, and then translocates them to the proteolytic subunit (CLPP) of the ClpXP complex for degradation. Thanks to its chaperone activity, it also functions in the incorporation of the pyridoxal phosphate cofactor into 5-aminolevulinate synthase, thereby activating 5-aminolevulinate (ALA) synthesis, the first step in heme biosynthesis. This chaperone is also involved in the control of mtDNA nucleoid distribution, by regulating mitochondrial transcription factor A (TFAM) activity. The protein is ATP-dependent clpX-like chaperone, mitochondrial of Mus musculus (Mouse).